Here is a 252-residue protein sequence, read N- to C-terminus: tRNA (guanine-N(7)-)-methyltransferase (252 aa).

Positions 80, 105, 132, and 155 each coordinate S-adenosyl-L-methionine. D155 is an active-site residue. Residues K159, D191, and T231–E234 each bind substrate.

It belongs to the class I-like SAM-binding methyltransferase superfamily. TrmB family.

It carries out the reaction guanosine(46) in tRNA + S-adenosyl-L-methionine = N(7)-methylguanosine(46) in tRNA + S-adenosyl-L-homocysteine. It functions in the pathway tRNA modification; N(7)-methylguanine-tRNA biosynthesis. Functionally, catalyzes the formation of N(7)-methylguanine at position 46 (m7G46) in tRNA. This Actinobacillus succinogenes (strain ATCC 55618 / DSM 22257 / CCUG 43843 / 130Z) protein is tRNA (guanine-N(7)-)-methyltransferase.